A 45-amino-acid chain; its full sequence is Large ribosomal subunit protein bL34 (45 aa).

The segment at 1-45 (MTKRTFQPNNRRRARKHGFRARMRTRAGRAILSARRGKNRAELSA) is disordered. The segment covering 10–27 (NRRRARKHGFRARMRTRA) has biased composition (basic residues).

It belongs to the bacterial ribosomal protein bL34 family.

This is Large ribosomal subunit protein bL34 from Micrococcus luteus (strain ATCC 4698 / DSM 20030 / JCM 1464 / CCM 169 / CCUG 5858 / IAM 1056 / NBRC 3333 / NCIMB 9278 / NCTC 2665 / VKM Ac-2230) (Micrococcus lysodeikticus).